Reading from the N-terminus, the 497-residue chain is Acetyl-coenzyme A carboxylase carboxyl transferase subunit beta, chloroplastic (497 aa).

The 268-residue stretch at L230 to K497 folds into the CoA carboxyltransferase N-terminal domain. Zn(2+) contacts are provided by C234, C237, C253, and C256. A C4-type zinc finger spans residues C234–C256.

It belongs to the AccD/PCCB family. Acetyl-CoA carboxylase is a heterohexamer composed of biotin carboxyl carrier protein, biotin carboxylase and 2 subunits each of ACCase subunit alpha and ACCase plastid-coded subunit beta (accD). Requires Zn(2+) as cofactor.

Its subcellular location is the plastid. It is found in the chloroplast stroma. It carries out the reaction N(6)-carboxybiotinyl-L-lysyl-[protein] + acetyl-CoA = N(6)-biotinyl-L-lysyl-[protein] + malonyl-CoA. It participates in lipid metabolism; malonyl-CoA biosynthesis; malonyl-CoA from acetyl-CoA: step 1/1. Component of the acetyl coenzyme A carboxylase (ACC) complex. Biotin carboxylase (BC) catalyzes the carboxylation of biotin on its carrier protein (BCCP) and then the CO(2) group is transferred by the transcarboxylase to acetyl-CoA to form malonyl-CoA. The chain is Acetyl-coenzyme A carboxylase carboxyl transferase subunit beta, chloroplastic from Platanus occidentalis (Sycamore).